The primary structure comprises 588 residues: Calicin (588 aa).

Residues 12 to 124 (SFVLQNLNRQ…RLRVHCNDFL (113 aa)) form the BTB domain. In terms of domain architecture, BACK spans 133–235 (CLRYLFLAEL…NAVSNKTLVF (103 aa)). A Phosphoserine modification is found at S149. Kelch repeat units lie at residues 280-327 (SVVI…SAGR), 328-375 (YIYI…TCGG), 377-423 (VYSV…TKGD), 425-475 (HLYI…SFQQ), 476-525 (DNIL…IGDS), and 526-580 (KVFV…LAKL).

As to quaternary structure, interacts with CYLC1; the interaction may be relevant for proper acrosome attachment to the nuclear envelope. In terms of tissue distribution, expressed in testis, in spermatozoa (at protein level).

It localises to the cytoplasm. It is found in the cytoskeleton. Its subcellular location is the perinuclear theca. The protein localises to the calyx. Its function is as follows. Required for both nuclear and acrosomal shaping during spermiogenesis. The polypeptide is Calicin (CCIN) (Homo sapiens (Human)).